A 553-amino-acid polypeptide reads, in one-letter code: Dihydroxy-acid dehydratase (553 aa).

Mg(2+) is bound at residue Asp78. Cys119 contacts [2Fe-2S] cluster. The Mg(2+) site is built by Asp120 and Lys121. Lys121 carries the N6-carboxylysine modification. [2Fe-2S] cluster is bound at residue Cys193. Glu441 is a binding site for Mg(2+). The Proton acceptor role is filled by Ser467.

It belongs to the IlvD/Edd family. As to quaternary structure, homodimer. Requires [2Fe-2S] cluster as cofactor. It depends on Mg(2+) as a cofactor.

It carries out the reaction (2R)-2,3-dihydroxy-3-methylbutanoate = 3-methyl-2-oxobutanoate + H2O. The enzyme catalyses (2R,3R)-2,3-dihydroxy-3-methylpentanoate = (S)-3-methyl-2-oxopentanoate + H2O. It functions in the pathway amino-acid biosynthesis; L-isoleucine biosynthesis; L-isoleucine from 2-oxobutanoate: step 3/4. It participates in amino-acid biosynthesis; L-valine biosynthesis; L-valine from pyruvate: step 3/4. Its function is as follows. Functions in the biosynthesis of branched-chain amino acids. Catalyzes the dehydration of (2R,3R)-2,3-dihydroxy-3-methylpentanoate (2,3-dihydroxy-3-methylvalerate) into 2-oxo-3-methylpentanoate (2-oxo-3-methylvalerate) and of (2R)-2,3-dihydroxy-3-methylbutanoate (2,3-dihydroxyisovalerate) into 2-oxo-3-methylbutanoate (2-oxoisovalerate), the penultimate precursor to L-isoleucine and L-valine, respectively. This chain is Dihydroxy-acid dehydratase, found in Citrifermentans bemidjiense (strain ATCC BAA-1014 / DSM 16622 / JCM 12645 / Bem) (Geobacter bemidjiensis).